Consider the following 117-residue polypeptide: Protein MGF 110-13L (117 aa).

The signal sequence occupies residues 1–16; it reads MKLFVLLSILVWLAQP.

It belongs to the asfivirus MGF 110 family.

The chain is Protein MGF 110-13L from Ornithodoros (relapsing fever ticks).